A 713-amino-acid chain; its full sequence is Segment polarity protein dishevelled homolog DVL-3 (713 aa).

Positions 1–82 (MGETKVIYHL…RVVCWLVSAD (82 aa)) constitute a DIX domain. 2 stretches are compositionally biased toward polar residues: residues 87-98 (DAGSVCADNQSD) and 118-127 (HPNTRGSQEN). A disordered region spans residues 87-235 (DAGSVCADNQ…PRIERSSSFS (149 aa)). A compositionally biased stretch (basic and acidic residues) spans 140–155 (AHRERPRRKETPEHAT). The span at 173–189 (ESSSTLMSSELDSTSFF) shows a compositional bias: low complexity. Residues 199–210 (RFSNSTEQSSAS) show a composition bias toward polar residues. The segment covering 212–225 (LMRRHKRRRRKPKA) has biased composition (basic residues). In terms of domain architecture, PDZ spans 248–333 (TVTLNMEKYN…KPGPITLTVA (86 aa)). The DEP domain maps to 421-495 (PESGLEVRDR…SEQCYYIFGD (75 aa)). The span at 508–518 (HDGSSGTSDQD) shows a compositional bias: polar residues. Disordered stretches follow at residues 508–527 (HDGS…PHPG) and 545–652 (YSPH…GPPG). Low complexity predominate over residues 564–579 (GSQHSEGSRSSGSNRS). Composition is skewed to basic and acidic residues over residues 580-593 (STEK…KGGD) and 602-618 (ESDH…RAAS). A compositionally biased stretch (basic residues) spans 629 to 646 (HRSHHSIAHSIRSHHTHH).

This sequence belongs to the DSH family.

It is found in the cytoplasm. Functionally, involved in the signal transduction pathway mediated by multiple Wnt genes. Required during ciliogenesis for the docking of basal bodies to the apical plasma membrane. The sequence is that of Segment polarity protein dishevelled homolog DVL-3 from Xenopus tropicalis (Western clawed frog).